The primary structure comprises 778 residues: Ribonucleoside-diphosphate reductase large subunit (778 aa).

Residues Ser177, 192 to 193 (SC), Gly221, 419 to 423 (NLCIE), and 613 to 617 (PTATS) each bind substrate. A disulfide bridge connects residues Cys193 and Cys439. Asn419 acts as the Proton acceptor in catalysis. Cys421 (cysteine radical intermediate) is an active-site residue. Catalysis depends on Glu423, which acts as the Proton acceptor.

Belongs to the ribonucleoside diphosphate reductase large chain family. Heterotetramer composed of a homodimer of the large subunit (R1) and a homodimer of the small subunit (R2). Larger multisubunit protein complex are also active, composed of (R1)n(R2)n.

It catalyses the reaction a 2'-deoxyribonucleoside 5'-diphosphate + [thioredoxin]-disulfide + H2O = a ribonucleoside 5'-diphosphate + [thioredoxin]-dithiol. Under complex allosteric control mediated by deoxynucleoside triphosphates and ATP binding. The type of nucleotide bound at the specificity site determines substrate preference. It seems probable that ATP makes the enzyme reduce CDP and UDP, dGTP favors ADP reduction and dTTP favors GDP reduction. Functionally, ribonucleoside-diphosphate reductase holoenzyme provides the precursors necessary for viral DNA synthesis. Allows virus growth in non-dividing cells. Catalyzes the biosynthesis of deoxyribonucleotides from the corresponding ribonucleotides. In African swine fever virus (isolate Tick/South Africa/Pretoriuskop Pr4/1996) (ASFV), this protein is Ribonucleoside-diphosphate reductase large subunit.